The chain runs to 309 residues: Ribonuclease Z (309 aa).

Zn(2+) contacts are provided by histidine 63, histidine 65, aspartate 67, histidine 68, histidine 141, aspartate 212, and histidine 270. The active-site Proton acceptor is the aspartate 67.

Belongs to the RNase Z family. As to quaternary structure, homodimer. Requires Zn(2+) as cofactor.

It catalyses the reaction Endonucleolytic cleavage of RNA, removing extra 3' nucleotides from tRNA precursor, generating 3' termini of tRNAs. A 3'-hydroxy group is left at the tRNA terminus and a 5'-phosphoryl group is left at the trailer molecule.. Its function is as follows. Zinc phosphodiesterase, which displays some tRNA 3'-processing endonuclease activity. Probably involved in tRNA maturation, by removing a 3'-trailer from precursor tRNA. This chain is Ribonuclease Z, found in Limosilactobacillus reuteri (strain DSM 20016) (Lactobacillus reuteri).